Reading from the N-terminus, the 95-residue chain is MSLNTHDVKRIAHLARIAVSEEEAEATLVKLSGILGLIEEMQAVDTSGIVPMSHSQDVTQRLREDVVTESNQRDLLQSIAPAVENGLYLVPKVIE.

It belongs to the GatC family. As to quaternary structure, heterotrimer of A, B and C subunits.

It carries out the reaction L-glutamyl-tRNA(Gln) + L-glutamine + ATP + H2O = L-glutaminyl-tRNA(Gln) + L-glutamate + ADP + phosphate + H(+). It catalyses the reaction L-aspartyl-tRNA(Asn) + L-glutamine + ATP + H2O = L-asparaginyl-tRNA(Asn) + L-glutamate + ADP + phosphate + 2 H(+). In terms of biological role, allows the formation of correctly charged Asn-tRNA(Asn) or Gln-tRNA(Gln) through the transamidation of misacylated Asp-tRNA(Asn) or Glu-tRNA(Gln) in organisms which lack either or both of asparaginyl-tRNA or glutaminyl-tRNA synthetases. The reaction takes place in the presence of glutamine and ATP through an activated phospho-Asp-tRNA(Asn) or phospho-Glu-tRNA(Gln). In Methylobacillus flagellatus (strain ATCC 51484 / DSM 6875 / VKM B-1610 / KT), this protein is Aspartyl/glutamyl-tRNA(Asn/Gln) amidotransferase subunit C.